The following is a 260-amino-acid chain: Acyl-coenzyme A diphosphatase FITM2 (260 aa).

At Met1–His23 the chain is on the cytoplasmic side. A helical transmembrane segment spans residues Cys24 to Leu44. The Lumenal segment spans residues Pro45 to Asn57. The chain crosses the membrane as a helical span at residues Val58–Leu78. Residues Thr79–Arg93 lie on the Cytoplasmic side of the membrane. The helical transmembrane segment at Leu94–Ile114 threads the bilayer. Over Glu115 to Gly144 the chain is Lumenal. Residues Phe145 to Ile165 traverse the membrane as a helical segment. Residue His154 is part of the active site. Over Leu166 to Gln189 the chain is Cytoplasmic. Helical transmembrane passes span Phe190–Tyr210 and Phe211–Thr231. His212 is an active-site residue. Residues Tyr232 to Asn260 lie on the Cytoplasmic side of the membrane.

The protein belongs to the FIT family. FIT2 subfamily.

Its subcellular location is the endoplasmic reticulum membrane. The catalysed reaction is an acyl-CoA + H2O = an acyl-4'-phosphopantetheine + adenosine 3',5'-bisphosphate + 2 H(+). Functionally, fatty acyl-coenzyme A (CoA) diphosphatase that hydrolyzes fatty acyl-CoA to yield acyl-4'-phosphopantetheine and adenosine 3',5'-bisphosphate. Preferentially hydrolyzes unsaturated long-chain acyl-CoA substrates in the endoplasmic reticulum (ER) lumen. This catalytic activity is required for maintaining ER structure and for lipid droplets (LDs) biogenesis, which are lipid storage organelles involved in maintaining lipid and energy homeostasis. May directly bind to diacylglycerol (DAGs) and triacylglycerol, which is also important for LD biogenesis. May support directional budding of nacent LDs from the ER into the cytosol by reducing DAG levels at sites of LD formation. May play a role in the regulation of cell morphology, ER morphology and cytoskeletal organization. This is Acyl-coenzyme A diphosphatase FITM2 from Xenopus laevis (African clawed frog).